A 352-amino-acid polypeptide reads, in one-letter code: DNA polymerase IV (352 aa).

Residues 6–186 (IIHIDMDAFY…LPLGKIPGVG (181 aa)) form the UmuC domain. 2 residues coordinate Mg(2+): Asp-10 and Asp-104. The active site involves Glu-105.

The protein belongs to the DNA polymerase type-Y family. Monomer. Mg(2+) serves as cofactor.

The protein localises to the cytoplasm. It catalyses the reaction DNA(n) + a 2'-deoxyribonucleoside 5'-triphosphate = DNA(n+1) + diphosphate. Poorly processive, error-prone DNA polymerase involved in untargeted mutagenesis. Copies undamaged DNA at stalled replication forks, which arise in vivo from mismatched or misaligned primer ends. These misaligned primers can be extended by PolIV. Exhibits no 3'-5' exonuclease (proofreading) activity. May be involved in translesional synthesis, in conjunction with the beta clamp from PolIII. The chain is DNA polymerase IV from Neisseria meningitidis serogroup C / serotype 2a (strain ATCC 700532 / DSM 15464 / FAM18).